The sequence spans 224 residues: DNA mismatch repair protein MutH (224 aa).

Belongs to the MutH family.

The protein resides in the cytoplasm. In terms of biological role, sequence-specific endonuclease that cleaves unmethylated GATC sequences. It is involved in DNA mismatch repair. This chain is DNA mismatch repair protein MutH, found in Histophilus somni (strain 2336) (Haemophilus somnus).